The following is a 359-amino-acid chain: 3-dehydroquinate synthase (359 aa).

NAD(+) contacts are provided by residues 71–76 (DGEAYK), 105–109 (GVVGD), 129–130 (TT), Lys-142, and Lys-151. Glu-184, His-247, and His-264 together coordinate Zn(2+).

It belongs to the sugar phosphate cyclases superfamily. Dehydroquinate synthase family. The cofactor is Co(2+). Zn(2+) is required as a cofactor. Requires NAD(+) as cofactor.

The protein resides in the cytoplasm. The enzyme catalyses 7-phospho-2-dehydro-3-deoxy-D-arabino-heptonate = 3-dehydroquinate + phosphate. Its pathway is metabolic intermediate biosynthesis; chorismate biosynthesis; chorismate from D-erythrose 4-phosphate and phosphoenolpyruvate: step 2/7. In terms of biological role, catalyzes the conversion of 3-deoxy-D-arabino-heptulosonate 7-phosphate (DAHP) to dehydroquinate (DHQ). The chain is 3-dehydroquinate synthase from Burkholderia orbicola (strain MC0-3).